Reading from the N-terminus, the 209-residue chain is Large ribosomal subunit protein uL4 (209 aa).

A disordered region spans residues 50 to 78 (STLKKGEVSGGGKKPYQQKHTGRARQGSI).

The protein belongs to the universal ribosomal protein uL4 family. In terms of assembly, part of the 50S ribosomal subunit.

Its function is as follows. One of the primary rRNA binding proteins, this protein initially binds near the 5'-end of the 23S rRNA. It is important during the early stages of 50S assembly. It makes multiple contacts with different domains of the 23S rRNA in the assembled 50S subunit and ribosome. Functionally, forms part of the polypeptide exit tunnel. This chain is Large ribosomal subunit protein uL4, found in Mycoplasmoides gallisepticum (strain R(low / passage 15 / clone 2)) (Mycoplasma gallisepticum).